Here is a 69-residue protein sequence, read N- to C-terminus: Cytochrome c oxidase subunit 8A, mitochondrial (69 aa).

Residues 1–25 (MSVLTPLLLRGLTGSARRLPVPRAK) constitute a mitochondrion transit peptide. The SIFI-degron signature appears at 2 to 19 (SVLTPLLLRGLTGSARRL). Topologically, residues 26-36 (IHSLPPEGKLG) are mitochondrial matrix. The helical transmembrane segment at 37–60 (IMELAVGLTSCFVTFLLPAGWILS) threads the bilayer. Residues 61-69 (HLETYRRPE) lie on the Mitochondrial intermembrane side of the membrane.

The protein belongs to the cytochrome c oxidase VIII family. As to quaternary structure, component of the cytochrome c oxidase (complex IV, CIV), a multisubunit enzyme composed of 14 subunits. The complex is composed of a catalytic core of 3 subunits MT-CO1, MT-CO2 and MT-CO3, encoded in the mitochondrial DNA, and 11 supernumerary subunits COX4I1 (or COX4I2), COX5A, COX5B, COX6A1 (or COX6A2), COX6B1 (or COX6B2), COX6C, COX7A2 (or COX7A1), COX7B, COX7C, COX8A and NDUFA4, which are encoded in the nuclear genome. The complex exists as a monomer or a dimer and forms supercomplexes (SCs) in the inner mitochondrial membrane with NADH-ubiquinone oxidoreductase (complex I, CI) and ubiquinol-cytochrome c oxidoreductase (cytochrome b-c1 complex, complex III, CIII), resulting in different assemblies (supercomplex SCI(1)III(2)IV(1) and megacomplex MCI(2)III(2)IV(2)). In response to mitochondrial stress, the precursor protein is ubiquitinated by the SIFI complex in the cytoplasm before mitochondrial import, leading to its degradation. Within the SIFI complex, UBR4 initiates ubiquitin chain that are further elongated or branched by KCMF1. In terms of tissue distribution, widely expressed.

The protein resides in the mitochondrion inner membrane. It functions in the pathway energy metabolism; oxidative phosphorylation. In terms of biological role, component of the cytochrome c oxidase, the last enzyme in the mitochondrial electron transport chain which drives oxidative phosphorylation. The respiratory chain contains 3 multisubunit complexes succinate dehydrogenase (complex II, CII), ubiquinol-cytochrome c oxidoreductase (cytochrome b-c1 complex, complex III, CIII) and cytochrome c oxidase (complex IV, CIV), that cooperate to transfer electrons derived from NADH and succinate to molecular oxygen, creating an electrochemical gradient over the inner membrane that drives transmembrane transport and the ATP synthase. Cytochrome c oxidase is the component of the respiratory chain that catalyzes the reduction of oxygen to water. Electrons originating from reduced cytochrome c in the intermembrane space (IMS) are transferred via the dinuclear copper A center (CU(A)) of subunit 2 and heme A of subunit 1 to the active site in subunit 1, a binuclear center (BNC) formed by heme A3 and copper B (CU(B)). The BNC reduces molecular oxygen to 2 water molecules using 4 electrons from cytochrome c in the IMS and 4 protons from the mitochondrial matrix. The protein is Cytochrome c oxidase subunit 8A, mitochondrial (COX8A) of Homo sapiens (Human).